The following is a 368-amino-acid chain: Endophilin-A2 (368 aa).

Residues 1-21 (MSVAGLKKQFYKASQLVSEKV) are membrane-binding amphipathic helix. In terms of domain architecture, BAR spans 18–249 (SEKVGGAEGT…LKRRMREASS (232 aa)). A required for dimerization upon membrane association region spans residues 60 to 87 (PNPASRAKLTMLNTVSKIRGQVKNPGYP). The stretch at 145 to 250 (NLCEKDLKEI…KRRMREASSR (106 aa)) forms a coiled coil. Positions 218–254 (LVDAQLDYHRQAVQILDELAEKLKRRMREASSRPKRE) are interaction with ARC. Positions 244-308 (MREASSRPKR…PSRSMPPLDQ (65 aa)) are disordered. Residues 245 to 263 (REASSRPKREYKPKPREPF) show a composition bias toward basic and acidic residues. 2 positions are modified to phosphoserine: Ser288 and Ser292. Thr298 is modified (phosphothreonine). An SH3 domain is found at 306–365 (LDQPSCKALYDFEPENDGELGFHEGDVITLTNQIDENWYEGMLDGQSGFFPLSYVEVLVP). The residue at position 315 (Tyr315) is a Phosphotyrosine.

It belongs to the endophilin family. As to quaternary structure, interacts with ARC. Interacts with SYNJ1 and DNM1. Interacts with PDCD6IP. Interacts with BIN2. In terms of tissue distribution, ubiquitous. Higher expression in pancreas, placenta, prostate, testis and uterus.

The protein localises to the cytoplasm. It is found in the early endosome membrane. The protein resides in the cell projection. It localises to the podosome. Functionally, implicated in endocytosis. May recruit other proteins to membranes with high curvature. This is Endophilin-A2 (SH3GL1) from Homo sapiens (Human).